The following is a 475-amino-acid chain: Adenosylhomocysteinase (475 aa).

Positions 61, 140, and 200 each coordinate substrate. 201 to 203 (TTT) provides a ligand contact to NAD(+). Substrate is bound by residues lysine 230 and aspartate 234. Residues asparagine 235, 264–269 (GYGDVG), glutamate 287, asparagine 322, 343–345 (IGH), and asparagine 388 contribute to the NAD(+) site.

Belongs to the adenosylhomocysteinase family. It depends on NAD(+) as a cofactor.

The protein resides in the cytoplasm. It carries out the reaction S-adenosyl-L-homocysteine + H2O = L-homocysteine + adenosine. It participates in amino-acid biosynthesis; L-homocysteine biosynthesis; L-homocysteine from S-adenosyl-L-homocysteine: step 1/1. Its function is as follows. May play a key role in the regulation of the intracellular concentration of adenosylhomocysteine. This Paracidovorax citrulli (strain AAC00-1) (Acidovorax citrulli) protein is Adenosylhomocysteinase.